Reading from the N-terminus, the 53-residue chain is ATP synthase protein 8 (53 aa).

Residues 5–25 (APISWLTLFFVFSITLVIFNI) form a helical membrane-spanning segment.

This sequence belongs to the ATPase protein 8 family. In terms of assembly, F-type ATPases have 2 components, CF(1) - the catalytic core - and CF(0) - the membrane proton channel.

Its subcellular location is the mitochondrion membrane. In terms of biological role, mitochondrial membrane ATP synthase (F(1)F(O) ATP synthase or Complex V) produces ATP from ADP in the presence of a proton gradient across the membrane which is generated by electron transport complexes of the respiratory chain. F-type ATPases consist of two structural domains, F(1) - containing the extramembraneous catalytic core and F(0) - containing the membrane proton channel, linked together by a central stalk and a peripheral stalk. During catalysis, ATP synthesis in the catalytic domain of F(1) is coupled via a rotary mechanism of the central stalk subunits to proton translocation. Part of the complex F(0) domain. Minor subunit located with subunit a in the membrane. The polypeptide is ATP synthase protein 8 (Aedes aegypti (Yellowfever mosquito)).